Here is a 375-residue protein sequence, read N- to C-terminus: Lipid droplet hydrolase 1 (375 aa).

Residues 88–358 (VFVFVPGLAG…CSHNLCFDRP (271 aa)) form the AB hydrolase-1 domain. The Charge relay system role is filled by Ser-177. The Microbody targeting signal signature appears at 373–375 (SKL).

Belongs to the AB hydrolase superfamily. Lipase family.

It is found in the lipid droplet. The enzyme catalyses a triacylglycerol + H2O = a diacylglycerol + a fatty acid + H(+). Its function is as follows. Serine hydrolase required for the maintenance of steady state level of non-polar and polar lipids of lipid droplets and thus plays a role in maintaining the lipids homeostasis. Exhibits both esterase and triacylglycerol lipase activity. This Saccharomyces cerevisiae (strain ATCC 204508 / S288c) (Baker's yeast) protein is Lipid droplet hydrolase 1.